Here is a 267-residue protein sequence, read N- to C-terminus: Cell division control protein 11 (267 aa).

The Septin-type G domain occupies 6-263 (QNRRFTIMAA…ENYRAAVLEG (258 aa)). The tract at residues 16–23 (GPRGSGKS) is G1 motif. GTP contacts are provided by residues 16-23 (GPRGSGKS), glycine 66, 146-154 (KSDGLSITE), and arginine 212. The segment at 63–66 (DTPG) is G3 motif. Positions 145 to 148 (SKSD) are G4 motif.

The protein belongs to the TRAFAC class TrmE-Era-EngA-EngB-Septin-like GTPase superfamily. Septin GTPase family. In terms of assembly, component of the septin complex.

Septins are GTPases involved in cytokinesis. The septins localize to the site of cleavage and act as a structural scaffold that recruits different components involved in diverse processes at specific stages during the cell cycle. Septins are also involved in cell morphogenesis, chitin deposition, cell cycle regulation, cell compartmentalization and spore wall formation. In Encephalitozoon cuniculi (strain GB-M1) (Microsporidian parasite), this protein is Cell division control protein 11 (CDC11).